A 228-amino-acid polypeptide reads, in one-letter code: Ribulose-phosphate 3-epimerase-like protein 1 (228 aa).

Residue Ser-10 coordinates substrate. His-35, Asp-37, and His-70 together coordinate a divalent metal cation. The active-site Proton acceptor is Asp-37. Residues His-70, 146–149 (GFGE), 175–177 (DGG), and 197–198 (GS) each bind substrate. An a divalent metal cation-binding site is contributed by Asp-175. The active-site Proton donor is the Asp-175.

The protein belongs to the ribulose-phosphate 3-epimerase family. In terms of assembly, homodimer. The cofactor is Fe(2+). It depends on Mn(2+) as a cofactor. Zn(2+) serves as cofactor. Requires Co(2+) as cofactor.

The enzyme catalyses D-ribulose 5-phosphate = D-xylulose 5-phosphate. It functions in the pathway carbohydrate degradation. In terms of biological role, catalyzes the reversible epimerization of D-ribulose 5-phosphate to D-xylulose 5-phosphate. The polypeptide is Ribulose-phosphate 3-epimerase-like protein 1 (RPEL1) (Homo sapiens (Human)).